A 187-amino-acid chain; its full sequence is Elongation factor P (187 aa).

Belongs to the elongation factor P family.

The protein localises to the cytoplasm. It participates in protein biosynthesis; polypeptide chain elongation. Involved in peptide bond synthesis. Stimulates efficient translation and peptide-bond synthesis on native or reconstituted 70S ribosomes in vitro. Probably functions indirectly by altering the affinity of the ribosome for aminoacyl-tRNA, thus increasing their reactivity as acceptors for peptidyl transferase. This is Elongation factor P from Rhodococcus jostii (strain RHA1).